Reading from the N-terminus, the 722-residue chain is Disintegrin and metalloproteinase domain-containing protein 21 (722 aa).

The N-terminal stretch at Met-1–Ala-31 is a signal peptide. The propeptide occupies Gly-32–Glu-196. An N-linked (GlcNAc...) asparagine glycan is attached at Asn-164. The Cysteine switch motif lies at Met-171 to Lys-178. Cys-173 serves as a coordination point for Zn(2+). The Extracellular portion of the chain corresponds to Pro-197–Gly-681. The Peptidase M12B domain occupies Trp-208–Pro-398. N-linked (GlcNAc...) asparagine glycosylation is present at Asn-227. Cystine bridges form between Cys-316–Cys-393, Cys-356–Cys-378, and Cys-358–Cys-363. His-341 contacts Zn(2+). Glu-342 is an active-site residue. Residues His-345 and His-351 each contribute to the Zn(2+) site. 5 N-linked (GlcNAc...) asparagine glycosylation sites follow: Asn-377, Asn-437, Asn-478, Asn-546, and Asn-600. In terms of domain architecture, Disintegrin spans Leu-406–Asp-492. Cysteines 464 and 484 form a disulfide. 3 disulfide bridges follow: Cys-634–Cys-645, Cys-639–Cys-651, and Cys-653–Cys-662. The EGF-like domain maps to Cys-634–Gln-663. Residues Val-682–Gly-702 traverse the membrane as a helical segment. The Cytoplasmic segment spans residues Leu-703–Gly-722.

Zn(2+) is required as a cofactor. Post-translationally, has no obvious cleavage site for furin endopeptidase, suggesting that the proteolytic processing is regulated.

Its subcellular location is the membrane. Functionally, may be involved in sperm maturation and/or fertilization. May also be involved in epithelia functions associated with establishing and maintaining gradients of ions or nutrients. This chain is Disintegrin and metalloproteinase domain-containing protein 21 (ADAM21), found in Homo sapiens (Human).